The chain runs to 377 residues: Glutamate 5-kinase (377 aa).

K22 is a binding site for ATP. The substrate site is built by S62, D149, and N161. ATP-binding positions include 181 to 182 (TD) and 223 to 229 (TGGMVTK). The PUA domain occupies 285–363 (RGVLVADSGA…AQLRRLLGEE (79 aa)).

This sequence belongs to the glutamate 5-kinase family.

The protein resides in the cytoplasm. It carries out the reaction L-glutamate + ATP = L-glutamyl 5-phosphate + ADP. The protein operates within amino-acid biosynthesis; L-proline biosynthesis; L-glutamate 5-semialdehyde from L-glutamate: step 1/2. In terms of biological role, catalyzes the transfer of a phosphate group to glutamate to form L-glutamate 5-phosphate. In Bifidobacterium animalis subsp. lactis (strain AD011), this protein is Glutamate 5-kinase.